The chain runs to 488 residues: Stress activated transcription factor atfs-1 (488 aa).

Residues 1–23 (MFSRVGRLTTFGAQAVSNCPFRR) constitute a mitochondrion transit peptide. The disordered stretch occupies residues 138-191 (SWQNGSSVGHPHGHQQQQQTCQQPPTHSSTTETMHDFSNFGDNMGSPLFQSPSK). Positions 142–168 (GSSVGHPHGHQQQQQTCQQPPTHSSTT) are enriched in low complexity. Residue Lys342 forms a Glycyl lysine isopeptide (Lys-Gly) (interchain with G-Cter in smo-1) linkage. The tract at residues 353–400 (QRDDDDEDYIPASEARRTSSRLNRKSATPTYLRRRDSERSWTPASDDY) is disordered. The 64-residue stretch at 420-483 (DEETDRRRML…NSMKKELRKM (64 aa)) folds into the bZIP domain. The segment at 425–460 (RRRMLNRIAAVRYREKKRAEKKGRKMEFQEVADRNR) is basic motif. The short motif at 436-441 (RYREKK) is the Nuclear localization signal element. Residues 462–469 (LLQKERQL) form a leucine-zipper region.

This sequence belongs to the bZIP family. May be desumoylated by ulp-4. Ubiquitously expressed.

The protein resides in the mitochondrion matrix. It localises to the cytoplasm. The protein localises to the nucleus. Its function is as follows. Acts as a transcription factor during mitochondrial stress by activating the mitochondrial unfolded protein response (mtUPR). Induces nuclear and mitochondrial gene transcription, including genes coding for mitochondrial chaperones and proteins involved in glycolysis, amino acid catabolism and innate immunity. Following mitochondrial stress, restores mitochondrial respiratory capacity by limiting the transcription of oxidative phosphorylation (OXPHOS) machinery genes and by promoting the assembly of OXPHOS complexes via the up-regulation of chaperone and assembly factor genes. Component of a feedback loop involving atfs-1, atgl-1 and hlh-11. Acts together with flp-7 to negatively regulate the expression of the transcription regulator hlh-11, to promote expression of atgl-1, and thus atgl-1-dependent fat oxidation in response to mitochondrial stress. In addition, functions with hlh-11 to maintain lifespan. Promotes mtDNA maintenance and propagation of deleterious mtDNA. This chain is Stress activated transcription factor atfs-1, found in Caenorhabditis elegans.